We begin with the raw amino-acid sequence, 344 residues long: Glyceraldehyde-3-phosphate dehydrogenase (344 aa).

NAD(+)-binding positions include 11–12 and Gly110; that span reads TI. 139-141 contributes to the D-glyceraldehyde 3-phosphate binding site; the sequence is SCN. Residue Cys140 is the Nucleophile of the active site. Arg169 serves as a coordination point for NAD(+). 195–196 provides a ligand contact to D-glyceraldehyde 3-phosphate; it reads HG. Gln302 contacts NAD(+).

This sequence belongs to the glyceraldehyde-3-phosphate dehydrogenase family. As to quaternary structure, homotetramer.

The protein localises to the cytoplasm. The catalysed reaction is D-glyceraldehyde 3-phosphate + phosphate + NADP(+) = (2R)-3-phospho-glyceroyl phosphate + NADPH + H(+). It carries out the reaction D-glyceraldehyde 3-phosphate + phosphate + NAD(+) = (2R)-3-phospho-glyceroyl phosphate + NADH + H(+). Its pathway is carbohydrate degradation; glycolysis; pyruvate from D-glyceraldehyde 3-phosphate: step 1/5. This Pyrobaculum islandicum (strain DSM 4184 / JCM 9189 / GEO3) protein is Glyceraldehyde-3-phosphate dehydrogenase.